The primary structure comprises 1235 residues: Insulin receptor substrate 1 (1235 aa).

Phosphoserine is present on S3. Positions 3 to 133 are mediates interaction with PHIP; it reads SPPDTDGFSD…AGGGCGGSCS (131 aa). One can recognise a PH domain in the interval 12–115; sequence DVRKVGYLRK…WYQALLQLHN (104 aa). Position 99 is a phosphoserine; by CK2 (S99). Residues 155-259 form the IRS-type PTB domain; it reads FKEVWQVILK…EAMRAMSDEF (105 aa). Residues 258-425 form a disordered region; sequence EFRPRTKSQS…SDGGFISSDE (168 aa). 2 positions are modified to phosphoserine; by RPS6KB1: S265 and S302. Low complexity predominate over residues 265–276; the sequence is SQSSSSCSNPIS. Residue S307 is modified to Phosphoserine; by IKKB, MAPK8 and RPS6KB1. S318, S325, S340, and S343 each carry phosphoserine. The segment covering 349–358 has biased composition (basic residues); that stretch reads THAHRHRGSS. Low complexity-rich tracts occupy residues 378–399 and 407–419; these read SPSA…GSTS and SSAS…SDGG. Position 414 is a phosphoserine (S414). Phosphothreonine occurs at positions 441 and 448. Y460 bears the Phosphotyrosine; by INSR mark. Residues 460 to 463 carry the YXXM motif 1 motif; sequence YICM. Position 502 is a phosphothreonine; by CK2 (T502). The disordered stretch occupies residues 520 to 539; the sequence is THSAGTSPTISHQKTPSQSS. Residue S522 is modified to Phosphoserine; by RPS6KB1. The span at 522 to 539 shows a compositional bias: polar residues; that stretch reads SAGTSPTISHQKTPSQSS. 2 short sequence motifs (YXXM motif) span residues 546 to 549 and 608 to 611; these read YTEM and YMPM. A Phosphotyrosine; by INSR modification is found at Y608. S612 bears the Phosphoserine mark. Y628 is modified (phosphotyrosine; by INSR). Residues 628–631 carry the YXXM motif 4 motif; the sequence is YMPM. The residue at position 632 (S632) is a Phosphoserine; by RPS6KB1 and ROCK2. Position 658 is a phosphotyrosine (Y658). A YXXM motif 5 motif is present at residues 658–661; that stretch reads YMMM. The span at 669–689 shows a compositional bias: low complexity; the sequence is PDIGGGSCSSSSISAAPSGSS. A disordered region spans residues 669–720; it reads PDIGGGSCSSSSISAAPSGSSYGKPWTNGVGGHHTHALPHAKPPVESGGGKL. The YXXM motif 6 motif lies at 727-730; that stretch reads YMNM. A disordered region spans residues 766 to 921; sequence FKHTQRPGEP…ATSRSSPSVR (156 aa). Residues 771 to 780 show a composition bias toward basic and acidic residues; that stretch reads RPGEPEEGAR. Composition is skewed to low complexity over residues 785 to 794, 801 to 810, and 872 to 881; these read RLSSSSGRLR, DSSSSTSSDS, and QQQQQQQQQQ. S789 is subject to Phosphoserine; by AMPK and SIK2. S891 bears the Phosphoserine mark. Phosphotyrosine; by INSR occurs at positions 895, 939, and 987. The tract at residues 895–897 is GRB2-binding; that stretch reads YVN. 3 short sequence motifs (YXXM motif) span residues 939 to 942, 987 to 990, and 1010 to 1013; these read YMNM, YMTM, and YADM. A disordered region spans residues 1024–1165; it reads LPRTTGAAPP…SAPGCGAAGG (142 aa). The segment covering 1025-1046 has biased composition (low complexity); it reads PRTTGAAPPPSSTASASASVTP. The span at 1072-1084 shows a compositional bias: polar residues; the sequence is TRVNLSPNHNQSA. S1099 bears the Phosphoserine mark. S1100 bears the Phosphoserine; by RPS6KB1 mark. Over residues 1101-1114 the composition is skewed to polar residues; sequence ETFSAPTRAANTVS. The span at 1118 to 1128 shows a compositional bias: gly residues; that stretch reads GAAGGGSGGGS. Y1172 carries the phosphotyrosine; by INSR modification. Residues 1177 to 1235 are disordered; sequence LVKDVKQHPQDCPSQQQSLPPPPPHQPLGSNEGSSPRRSSEDLSTYASINFQKQPEDRQ. A Glycyl lysine isopeptide (Lys-Gly) (interchain with G-Cter in ubiquitin) cross-link involves residue K1179. Over residues 1204 to 1229 the composition is skewed to polar residues; the sequence is LGSNEGSSPRRSSEDLSTYASINFQK. A Phosphotyrosine; by INSR modification is found at Y1222.

In terms of assembly, interacts with SOCS7. Interacts (via IRS-type PTB domain) with IGF1R and INSR (via the tyrosine-phosphorylated NPXY motif). Interacts with UBTF, FER and PIK3CA. Interacts (via phosphorylated YXXM motifs) with PIK3R1. Interacts with ROCK1. Interacts (via PH domain) with PHIP. Interacts with GRB2. Interacts with ALK. Interacts with EIF2AK2/PKR. Interacts with GKAP1. Interacts with DGKZ in the absence of insulin; insulin stimulation decreases this interaction. Found in a ternary complex with DGKZ and PIP5K1A in the absence of insulin stimulation. Interacts with SQSTM1; the interaction is disrupted by the presence of tensin TNS2. Interacts with NCK1 (via SH2 domain). Interacts with NCK2 (via SH3 domain). Interacts with SH2B1; this interaction enhances leptin-induced activation of the PI3-kinase pathway. Interacts with DVL2; this interaction promotes the Wnt/beta-catenin signaling pathway. Interacts with JAK1. Serine phosphorylation of IRS1 is a mechanism for insulin resistance. Ser-307 phosphorylation inhibits insulin action through disruption of IRS1 interaction with the insulin receptor, and Ser-789 phosphorylation is increased in the liver of insulin-resistant rats. Phosphorylation of Tyr-895 is required for GRB2-binding. Phosphorylated by ALK. Phosphorylated at Ser-265, Ser-302, Ser-632 and Ser-1100 by RPS6KB1; phosphorylation induces accelerated degradation of IRS1. Phosphorylated on tyrosine residues in response to insulin. In skeletal muscles, dephosphorylated on Tyr-608 by TNS2 under anabolic conditions; dephosphorylation results in the proteasomal degradation of IRS1. In terms of processing, ubiquitinated by the Cul7-RING(FBXW8) complex in a mTOR-dependent manner, leading to its degradation: the Cul7-RING(FBXW8) complex recognizes and binds IRS1 previously phosphorylated by S6 kinase (RPS6KB1 or RPS6KB2). Ubiquitinated by TRAF4 through 'Lys-29' linkage; this ubiquitination regulates the interaction of IRS1 with IGFR and IRS1 tyrosine phosphorylation upon IGF1 stimulation. Post-translationally, S-nitrosylation at by BLVRB inhibits its activity.

Its subcellular location is the cytoplasm. The protein resides in the nucleus. Its function is as follows. Signaling adapter protein that participates in the signal transduction from two prominent receptor tyrosine kinases, insulin receptor/INSR and insulin-like growth factor I receptor/IGF1R. Plays therefore an important role in development, growth, glucose homeostasis as well as lipid metabolism. Upon phosphorylation by the insulin receptor, functions as a signaling scaffold that propagates insulin action through binding to SH2 domain-containing proteins including the p85 regulatory subunit of PI3K, NCK1, NCK2, GRB2 or SHP2. Recruitment of GRB2 leads to the activation of the guanine nucleotide exchange factor SOS1 which in turn triggers the Ras/Raf/MEK/MAPK signaling cascade. Activation of the PI3K/AKT pathway is responsible for most of insulin metabolic effects in the cell, and the Ras/Raf/MEK/MAPK is involved in the regulation of gene expression and in cooperation with the PI3K pathway regulates cell growth and differentiation. Acts a positive regulator of the Wnt/beta-catenin signaling pathway through suppression of DVL2 autophagy-mediated degradation leading to cell proliferation. The chain is Insulin receptor substrate 1 (Irs1) from Rattus norvegicus (Rat).